The chain runs to 271 residues: ATP synthase subunit a (271 aa).

The next 5 helical transmembrane spans lie at 40–60 (TINI…LVLF), 100–120 (LIAP…LMDL), 146–166 (DVNV…FYNI), 220–240 (LIFI…LNVP), and 242–262 (AIFH…LTIV).

The protein belongs to the ATPase A chain family. F-type ATPases have 2 components, CF(1) - the catalytic core - and CF(0) - the membrane proton channel. CF(1) has five subunits: alpha(3), beta(3), gamma(1), delta(1), epsilon(1). CF(0) has three main subunits: a(1), b(2) and c(9-12). The alpha and beta chains form an alternating ring which encloses part of the gamma chain. CF(1) is attached to CF(0) by a central stalk formed by the gamma and epsilon chains, while a peripheral stalk is formed by the delta and b chains.

The protein localises to the cell inner membrane. Functionally, key component of the proton channel; it plays a direct role in the translocation of protons across the membrane. The polypeptide is ATP synthase subunit a (Shigella flexneri).